The primary structure comprises 492 residues: Solute carrier family 2, facilitated glucose transporter member 1 (492 aa).

Methionine 1 bears the N-acetylmethionine mark. At methionine 1–arginine 11 the chain is on the cytoplasmic side. A helical membrane pass occupies residues leucine 12–isoleucine 33. The Extracellular segment spans residues asparagine 34–serine 66. Residue asparagine 45 is glycosylated (N-linked (GlcNAc...) asparagine). The helical transmembrane segment at leucine 67–valine 87 threads the bilayer. Residues asparagine 88–phenylalanine 90 are Cytoplasmic-facing. Residues glycine 91 to phenylalanine 112 traverse the membrane as a helical segment. At serine 113–glutamate 120 the chain is on the extracellular side. A helical transmembrane segment spans residues methionine 121 to valine 144. Threonine 137 is a cytochalasin B binding site. Topologically, residues glycine 145–alanine 155 are cytoplasmic. A helical membrane pass occupies residues leucine 156–leucine 176. The Extracellular portion of the chain corresponds to aspartate 177–leucine 185. The helical transmembrane segment at tryptophan 186–phenylalanine 206 threads the bilayer. Over cysteine 207 to proline 271 the chain is Cytoplasmic. Phosphoserine; by PKC/PRKCB is present on serine 226. A helical membrane pass occupies residues isoleucine 272–tyrosine 293. Glutamine 282 lines the cytochalasin B pocket. D-glucose is bound by residues glutamine 282–glutamine 283 and asparagine 288. Over serine 294–proline 306 the chain is Extracellular. Residues valine 307–valine 328 form a helical membrane-spanning segment. Asparagine 317 provides a ligand contact to D-glucose. At glutamate 329–arginine 334 the chain is on the cytoplasmic side. A helical membrane pass occupies residues threonine 335–leucine 355. Topologically, residues alanine 356 to serine 365 are extracellular. The chain crosses the membrane as a helical span at residues tyrosine 366–tryptophan 388. Glutamate 380 provides a ligand contact to D-glucose. Tryptophan 388 serves as a coordination point for cytochalasin B. The Cytoplasmic portion of the chain corresponds to phenylalanine 389–proline 401. The chain crosses the membrane as a helical span at residues alanine 402–phenylalanine 422. Asparagine 411 contacts cytochalasin B. Residues glutamine 423 to cysteine 429 lie on the Extracellular side of the membrane. The helical transmembrane segment at glycine 430–phenylalanine 450 threads the bilayer. Residues lysine 451 to valine 492 lie on the Cytoplasmic side of the membrane. Serine 465 bears the Phosphoserine mark. Positions arginine 468–valine 492 are disordered. Threonine 478 is subject to Phosphothreonine. A Phosphoserine modification is found at serine 490.

This sequence belongs to the major facilitator superfamily. Sugar transporter (TC 2.A.1.1) family. Glucose transporter subfamily. As to quaternary structure, interacts with GIPC (via PDZ domain). Found in a complex with ADD2, DMTN and SLC2A1. Interacts (via C-terminus cytoplasmic region) with DMTN isoform 2. Interacts with SNX27; the interaction is required when endocytosed to prevent degradation in lysosomes and promote recycling to the plasma membrane. Interacts with STOM. Interacts with SGTA (via Gln-rich region). Interacts with isoform 1 of BSG. In terms of processing, phosphorylation at Ser-226 by PKC promotes glucose uptake by increasing cell membrane localization. As to expression, detected in erythrocytes (at protein level). Expressed at variable levels in many human tissues.

It localises to the cell membrane. The protein resides in the melanosome. The protein localises to the photoreceptor inner segment. The enzyme catalyses D-glucose(out) = D-glucose(in). The protein operates within carbohydrate degradation. The uptake of glucose is inhibited by cytochalasin B and Phe-amide core-scaffold inhibitors GLUT-i1 and GLUT-i2. These inhibitors bind in the central cavity of the inward-open state and overlap the glucose-binding site. Glucose uptake is increased in response to phorbol ester 12-O-tetradecanoylphorbol-13-acetate (TPA) treatment: TPA-induced glucose uptake requires phosphorylation at Ser-226. Interacts with SMIM43; the interaction may promote SLC2A1-mediated glucose transport to meet the energy needs of mesendoderm differentiation. Functionally, facilitative glucose transporter, which is responsible for constitutive or basal glucose uptake. Has a very broad substrate specificity; can transport a wide range of aldoses including both pentoses and hexoses. Most important energy carrier of the brain: present at the blood-brain barrier and assures the energy-independent, facilitative transport of glucose into the brain. In association with BSG and NXNL1, promotes retinal cone survival by increasing glucose uptake into photoreceptors. Required for mesendoderm differentiation. This is Solute carrier family 2, facilitated glucose transporter member 1 from Homo sapiens (Human).